The following is a 147-amino-acid chain: uncharacterized protein (147 aa).

This is an uncharacterized protein from Saccharomyces cerevisiae (strain ATCC 204508 / S288c) (Baker's yeast).